The sequence spans 497 residues: Zinc finger protein 3 (497 aa).

Basic and acidic residues predominate over residues 1-20 (MGTEKKEGLPKEETSEDSKP). Residues 1 to 53 (MGTEKKEGLPKEETSEDSKPHGQTVEKLAQEVCHGHEFGEASEEDMSEGHLRE) are disordered. Glycyl lysine isopeptide (Lys-Gly) (interchain with G-Cter in SUMO2) cross-links involve residues K6 and K11. 13 C2H2-type zinc fingers span residues 136-158 (HTCKECGKAFNQNSHLIQHMRVH), 164-186 (FECKECGKTFGTNSSLRRHQRIH), 192-214 (FACTECGKAFIQSSHLIHHHRIH), 220-242 (YKCEECGKAFSQNSALILHQRIH), 248-270 (YECNECGKTFRVSSQLIQHQRIH), 276-298 (HECSECGKAFKHSSGLIRHQKIH), 304-326 (YLCNECGKGFGQSSELIRHQRIH), 332-354 (YECSECGKTFGQNSEIIRHIRIH), 360-382 (YVCKECGKAFRGNSELLRHERIH), 388-410 (YECFECGKAFRRTSHLIVHQRIH), 416-438 (HQCNECARTFWDNSELLLHQKIH), 444-466 (YECSECEKTFSQHSQLTIHQRIH), and 472-494 (YECQECQKTFSRSSHLLRHQSVH).

It belongs to the krueppel C2H2-type zinc-finger protein family.

It localises to the nucleus. May be involved in transcriptional regulation. The polypeptide is Zinc finger protein 3 (Zfp3) (Mus musculus (Mouse)).